The following is a 470-amino-acid chain: Small ribosomal subunit protein bS1m (470 aa).

The tract at residues 436 to 470 is disordered; the sequence is FKKIPMTAARLRGRYENSDSPSSPTMSGSSGYGLR. A compositionally biased stretch (low complexity) spans 453 to 464; the sequence is SDSPSSPTMSGS.

The protein belongs to the bacterial ribosomal protein bS1 family. As to quaternary structure, component of the mitochondrial small ribosomal subunit (mt-SSU). Mature N.crassa 74S mitochondrial ribosomes consist of a small (37S) and a large (54S) subunit. The 37S small subunit contains a 16S ribosomal RNA (16S mt-rRNA) and 32 different proteins. The 54S large subunit contains a 23S rRNA (23S mt-rRNA) and 42 different proteins.

It is found in the mitochondrion. Its function is as follows. Component of the mitochondrial ribosome (mitoribosome), a dedicated translation machinery responsible for the synthesis of mitochondrial genome-encoded proteins, including at least some of the essential transmembrane subunits of the mitochondrial respiratory chain. The mitoribosomes are attached to the mitochondrial inner membrane and translation products are cotranslationally integrated into the membrane. This Neurospora crassa (strain ATCC 24698 / 74-OR23-1A / CBS 708.71 / DSM 1257 / FGSC 987) protein is Small ribosomal subunit protein bS1m (mrp51).